The sequence spans 483 residues: Phosphomethylpyrimidine synthase (483 aa).

Residues N97, M126, Y156, H192, 212–214 (SRG), 253–256 (DSLR), and E292 each bind substrate. A Zn(2+)-binding site is contributed by H296. A substrate-binding site is contributed by Y319. H360 is a binding site for Zn(2+). [4Fe-4S] cluster contacts are provided by C440, C443, and C448.

It belongs to the ThiC family. It depends on [4Fe-4S] cluster as a cofactor.

The enzyme catalyses 5-amino-1-(5-phospho-beta-D-ribosyl)imidazole + S-adenosyl-L-methionine = 4-amino-2-methyl-5-(phosphooxymethyl)pyrimidine + CO + 5'-deoxyadenosine + formate + L-methionine + 3 H(+). The protein operates within cofactor biosynthesis; thiamine diphosphate biosynthesis. In terms of biological role, catalyzes the synthesis of the hydroxymethylpyrimidine phosphate (HMP-P) moiety of thiamine from aminoimidazole ribotide (AIR) in a radical S-adenosyl-L-methionine (SAM)-dependent reaction. In Parasynechococcus marenigrum (strain WH8102), this protein is Phosphomethylpyrimidine synthase.